The primary structure comprises 245 residues: Membrane-spanning 4-domains subfamily A member 15 (245 aa).

Positions 1–30 (MWERRGRGESAAGTAAVASRNASGLRPPPA) are disordered. A run of 4 helical transmembrane segments spans residues 78-98 (GTVQ…LLMV), 103-123 (LGML…FIIS), 147-167 (ILSA…FGVT), and 176-196 (LAVL…ATHF).

It belongs to the MS4A family.

The protein resides in the membrane. Its function is as follows. May be involved in signal transduction as a component of a multimeric receptor complex. The sequence is that of Membrane-spanning 4-domains subfamily A member 15 (Ms4a15) from Mus musculus (Mouse).